Consider the following 403-residue polypeptide: D-galactonate dehydratase family member RspA (403 aa).

Substrate-binding residues include Asn-37 and His-122. Tyr-159 serves as the catalytic Proton donor/acceptor. Mg(2+) is bound at residue Asp-211. The Proton donor/acceptor role is filled by His-213. Positions 237 and 263 each coordinate Mg(2+). Positions 263, 284, 313, 317, and 340 each coordinate substrate.

This sequence belongs to the mandelate racemase/muconate lactonizing enzyme family. GalD subfamily. The cofactor is Mg(2+).

It catalyses the reaction D-mannonate = 2-dehydro-3-deoxy-D-gluconate + H2O. The enzyme catalyses D-gluconate = 2-dehydro-3-deoxy-D-gluconate + H2O. Has low dehydratase activity with D-mannonate and D-gluconate, suggesting that these are not physiological substrates and that it has no significant role in the in vivo degradation of these compounds. Has no detectable activity with a panel of 70 other acid sugars (in vitro). In Halomonas elongata (strain ATCC 33173 / DSM 2581 / NBRC 15536 / NCIMB 2198 / 1H9), this protein is D-galactonate dehydratase family member RspA (rspA).